Consider the following 160-residue polypeptide: CST complex subunit STN1 (160 aa).

The OB DNA-binding region spans 41–133 (VEIVGTIVSR…QITANVAVAE (93 aa)).

It belongs to the STN1 family. In terms of assembly, component of the CST complex, composed of CTC1, TEN1 and STN1. Interacts with CTC1. Interacts with TEN1. Interacts with POT1A. In vitro interaction with TEN1 and POT1A is mutually exclusive, indicating that POT1A and TEN1 may compete for the same binding site. Widely expressed.

It localises to the nucleus. It is found in the chromosome. The protein resides in the telomere. Its function is as follows. Component of the CST complex, a complex that binds to single-stranded DNA and is required to protect telomeres from DNA degradation. The CST complex binds single-stranded DNA with high affinity in a sequence-independent manner, while isolated subunits bind DNA with low affinity by themselves. Associates with enzymatically active telomerase. Plays a genomewide role in DNA replication and facilitates re-replication at non-telomeric loci. In Arabidopsis thaliana (Mouse-ear cress), this protein is CST complex subunit STN1.